The sequence spans 250 residues: MARLILLRHGQSAWNLENRFTGWTDVDLSPAGEAEALAAARLIRDEGLDFSVCHTSMLTRAIRTLHLVQQELDRLWTPVRKHWRLNERHYGALQGLDKRETAARHGEDQVFVWRRSYDVPPPVIAPDDPKHPVHDPRYADVPPDVLPCGESLEATVARVLPYWYDAIAPDLMAGRDVLVAAHGNSLRALVMHLDGLDREDVSRLDIPTGLPRLYELDAALRPVSYRYLGDPAEAEERARAVAAQGRLEKN.

Substrate contacts are provided by residues 8-15 (RHGQSAWN), 21-22 (TG), arginine 60, 87-90 (ERHY), lysine 98, 114-115 (RR), and 183-184 (GN). Catalysis depends on histidine 9, which acts as the Tele-phosphohistidine intermediate. Glutamate 87 functions as the Proton donor/acceptor in the catalytic mechanism.

This sequence belongs to the phosphoglycerate mutase family. BPG-dependent PGAM subfamily. Homodimer.

It catalyses the reaction (2R)-2-phosphoglycerate = (2R)-3-phosphoglycerate. Its pathway is carbohydrate degradation; glycolysis; pyruvate from D-glyceraldehyde 3-phosphate: step 3/5. Catalyzes the interconversion of 2-phosphoglycerate and 3-phosphoglycerate. The sequence is that of 2,3-bisphosphoglycerate-dependent phosphoglycerate mutase from Nitratidesulfovibrio vulgaris (strain ATCC 29579 / DSM 644 / CCUG 34227 / NCIMB 8303 / VKM B-1760 / Hildenborough) (Desulfovibrio vulgaris).